The chain runs to 200 residues: Adenylyl-sulfate kinase (200 aa).

35–42 (GLPASGKS) is an ATP binding site. Ser-109 acts as the Phosphoserine intermediate in catalysis.

The protein belongs to the APS kinase family.

It catalyses the reaction adenosine 5'-phosphosulfate + ATP = 3'-phosphoadenylyl sulfate + ADP + H(+). Its pathway is sulfur metabolism; hydrogen sulfide biosynthesis; sulfite from sulfate: step 2/3. Its function is as follows. Catalyzes the synthesis of activated sulfate. This chain is Adenylyl-sulfate kinase, found in Thermodesulfovibrio yellowstonii (strain ATCC 51303 / DSM 11347 / YP87).